The chain runs to 306 residues: Ribonuclease Z (306 aa).

The Zn(2+) site is built by His-63, His-65, Asp-67, His-68, His-141, Asp-211, and His-269. Asp-67 (proton acceptor) is an active-site residue.

This sequence belongs to the RNase Z family. In terms of assembly, homodimer. Zn(2+) is required as a cofactor.

It catalyses the reaction Endonucleolytic cleavage of RNA, removing extra 3' nucleotides from tRNA precursor, generating 3' termini of tRNAs. A 3'-hydroxy group is left at the tRNA terminus and a 5'-phosphoryl group is left at the trailer molecule.. In terms of biological role, zinc phosphodiesterase, which displays some tRNA 3'-processing endonuclease activity. Probably involved in tRNA maturation, by removing a 3'-trailer from precursor tRNA. In Staphylococcus saprophyticus subsp. saprophyticus (strain ATCC 15305 / DSM 20229 / NCIMB 8711 / NCTC 7292 / S-41), this protein is Ribonuclease Z.